Reading from the N-terminus, the 953-residue chain is Vacuolar membrane protease (953 aa).

Over 1 to 16 (MDQTKPPRRNPLAFTP) the chain is Cytoplasmic. A helical membrane pass occupies residues 17-37 (WPVTLITAVVYLAFVIPLLVI). Residues 38-382 (HHVVPSAPTS…TFVLFRLHTL (345 aa)) are Vacuolar-facing. N-linked (GlcNAc...) asparagine glycans are attached at residues asparagine 53 and asparagine 115. Histidine 165 and aspartate 177 together coordinate Zn(2+). Glutamate 211 functions as the Proton acceptor in the catalytic mechanism. Glutamate 212, glutamate 237, and histidine 310 together coordinate Zn(2+). The chain crosses the membrane as a helical span at residues 383-403 (FALSVTLLVVAPIVLLLTSII). Residues 404–437 (LTKVDKMYLFRTSIRPEGSLEVLPLYGDRGVIRY) are Cytoplasmic-facing. Residues 438 to 458 (PFLLGIPTAVTIGLAYLLTKF) traverse the membrane as a helical segment. The Vacuolar segment spans residues 459-464 (NPYIVH). A helical transmembrane segment spans residues 465–485 (SSQYAVWSMMVSVWIFLAWFV). Residues 486–499 (SRVADFARPSAFHR) lie on the Cytoplasmic side of the membrane. The chain crosses the membrane as a helical span at residues 500 to 520 (VYTLTWTFVVMWVLQVIATVY). The Vacuolar segment spans residues 521 to 524 (QDRW). The chain crosses the membrane as a helical span at residues 525–545 (ALGGSYFIFFAYAGTFLATWI). At 546–650 (SYLELFALPR…SLPKWLWLLQ (105 aa)) the chain is on the cytoplasmic side. The disordered stretch occupies residues 570 to 599 (ASSHSSRRGLSEEDEEDEDEAPTESTSLLG). The segment covering 581-591 (EEDEEDEDEAP) has biased composition (acidic residues). Residues 651-671 (FLLAAPIVLILVGPIALLLTG) form a helical membrane-spanning segment. Over 672–684 (SLHQTGQDGSSSL) the chain is Vacuolar. The chain crosses the membrane as a helical span at residues 685 to 705 (FIYIAIVALTTLLLSPMLPFV). The Cytoplasmic portion of the chain corresponds to 706–711 (HRCTYH). Residues 712 to 732 (IPLFMLAVFAGTLIYNLVAFP) form a helical membrane-spanning segment. Over 733–953 (FSDSNRLKLF…VEGRKSFEIA (221 aa)) the chain is Vacuolar. An N-linked (GlcNAc...) asparagine glycan is attached at asparagine 779.

Belongs to the peptidase M28 family. The cofactor is Zn(2+).

Its subcellular location is the vacuole membrane. Functionally, may be involved in vacuolar sorting and osmoregulation. The polypeptide is Vacuolar membrane protease (Emericella nidulans (strain FGSC A4 / ATCC 38163 / CBS 112.46 / NRRL 194 / M139) (Aspergillus nidulans)).